The chain runs to 189 residues: Pyridoxal 5'-phosphate synthase subunit PdxT (189 aa).

An L-glutamine-binding site is contributed by 50-52 (GES). Catalysis depends on Cys80, which acts as the Nucleophile. L-glutamine is bound by residues Arg107 and 134-135 (IR). Catalysis depends on charge relay system residues His169 and Glu171.

The protein belongs to the glutaminase PdxT/SNO family. In terms of assembly, in the presence of PdxS, forms a dodecamer of heterodimers. Only shows activity in the heterodimer.

The enzyme catalyses aldehydo-D-ribose 5-phosphate + D-glyceraldehyde 3-phosphate + L-glutamine = pyridoxal 5'-phosphate + L-glutamate + phosphate + 3 H2O + H(+). It catalyses the reaction L-glutamine + H2O = L-glutamate + NH4(+). It functions in the pathway cofactor biosynthesis; pyridoxal 5'-phosphate biosynthesis. In terms of biological role, catalyzes the hydrolysis of glutamine to glutamate and ammonia as part of the biosynthesis of pyridoxal 5'-phosphate. The resulting ammonia molecule is channeled to the active site of PdxS. In Picrophilus torridus (strain ATCC 700027 / DSM 9790 / JCM 10055 / NBRC 100828 / KAW 2/3), this protein is Pyridoxal 5'-phosphate synthase subunit PdxT.